Reading from the N-terminus, the 201-residue chain is Dephospho-CoA kinase (201 aa).

The DPCK domain occupies 10-201 (LIGLTGGIAT…PQIIKAWHHR (192 aa)). An ATP-binding site is contributed by 18–23 (ATGKST).

It belongs to the CoaE family.

The protein resides in the cytoplasm. The catalysed reaction is 3'-dephospho-CoA + ATP = ADP + CoA + H(+). It functions in the pathway cofactor biosynthesis; coenzyme A biosynthesis; CoA from (R)-pantothenate: step 5/5. Functionally, catalyzes the phosphorylation of the 3'-hydroxyl group of dephosphocoenzyme A to form coenzyme A. The protein is Dephospho-CoA kinase of Synechocystis sp. (strain ATCC 27184 / PCC 6803 / Kazusa).